The following is a 106-amino-acid chain: Large ribosomal subunit protein uL24 (106 aa).

Basic and acidic residues predominate over residues 84–97 (EKIGRELGAKEKAR). Residues 84 to 106 (EKIGRELGAKEKARLQKRKTAAK) form a disordered region.

The protein belongs to the universal ribosomal protein uL24 family. In terms of assembly, part of the 50S ribosomal subunit.

Functionally, one of two assembly initiator proteins, it binds directly to the 5'-end of the 23S rRNA, where it nucleates assembly of the 50S subunit. In terms of biological role, one of the proteins that surrounds the polypeptide exit tunnel on the outside of the subunit. This Anaeromyxobacter dehalogenans (strain 2CP-1 / ATCC BAA-258) protein is Large ribosomal subunit protein uL24.